A 154-amino-acid chain; its full sequence is 6,7-dimethyl-8-ribityllumazine synthase (154 aa).

Residues phenylalanine 22, 56–58 (AFE), and 81–83 (VLI) each bind 5-amino-6-(D-ribitylamino)uracil. Position 86–87 (86–87 (ET)) interacts with (2S)-2-hydroxy-3-oxobutyl phosphate. The Proton donor role is filled by histidine 89. Position 114 (phenylalanine 114) interacts with 5-amino-6-(D-ribitylamino)uracil. Arginine 128 serves as a coordination point for (2S)-2-hydroxy-3-oxobutyl phosphate.

This sequence belongs to the DMRL synthase family.

The enzyme catalyses (2S)-2-hydroxy-3-oxobutyl phosphate + 5-amino-6-(D-ribitylamino)uracil = 6,7-dimethyl-8-(1-D-ribityl)lumazine + phosphate + 2 H2O + H(+). Its pathway is cofactor biosynthesis; riboflavin biosynthesis; riboflavin from 2-hydroxy-3-oxobutyl phosphate and 5-amino-6-(D-ribitylamino)uracil: step 1/2. Its function is as follows. Catalyzes the formation of 6,7-dimethyl-8-ribityllumazine by condensation of 5-amino-6-(D-ribitylamino)uracil with 3,4-dihydroxy-2-butanone 4-phosphate. This is the penultimate step in the biosynthesis of riboflavin. The polypeptide is 6,7-dimethyl-8-ribityllumazine synthase (Chlamydia abortus (strain DSM 27085 / S26/3) (Chlamydophila abortus)).